Reading from the N-terminus, the 334-residue chain is Dual specificity mitogen-activated protein kinase kinase 6 (334 aa).

Residues Met-1–Pro-11 are compositionally biased toward basic residues. The segment at Met-1–Asp-34 is disordered. The tract at residues Ser-4–Ala-19 is d domain. A Protein kinase domain is found at Leu-53–Phe-314. ATP is bound by residues Leu-59–Val-67 and Lys-82. The active-site Proton acceptor is Asp-179. A (Microbial infection) O-acetylserine; by Yersinia YopJ; alternate modification is found at Ser-207. Ser-207 bears the Phosphoserine; by MAP3K; alternate mark. At Thr-211 the chain carries (Microbial infection) O-acetylthreonine; by Yersinia YopJ; alternate. The residue at position 211 (Thr-211) is a Phosphothreonine; by MAP3K; alternate. Residues His-311–Asp-334 form a DVD domain region.

It belongs to the protein kinase superfamily. STE Ser/Thr protein kinase family. MAP kinase kinase subfamily. Dimer. Interacts (via its D domain) with its substrates MAPK11, MAPK12, MAPK13 and MAPK14. Interacts (via its DVD domain) with MAP3Ks activators like MAP3K5/ASK1, MAP3K1/MEKK1, MAP3K2/MEKK2, MAP3K3/MEKK3, MAP3K4/MEKK4, MAP3K7/TAK1, MAP3K11/MLK3 and MAP3K17/TAOK2. Interacts with DCTN1. Interacts with EIF2AK2/PKR. As to quaternary structure, (Microbial infection) Interacts with Yersinia YopJ. In terms of processing, weakly autophosphorylated. Phosphorylated at Ser-207 and Thr-211 by the majority of M3Ks, such as MAP3K5/ASK1, MAP3K1/MEKK1, MAP3K2/MEKK2, MAP3K3/MEKK3, MAP3K4/MEKK4, MAP3K7/TAK1, MAP3K11/MLK3 and MAP3K17/TAOK2. Post-translationally, in response to genotoxic stress, MAP3K-phosphorylated MAP2K6 is ubiquitinated and degraded by the SCF(FBXO31) complex. (Microbial infection) Acetylation of Ser-207 and Thr-211 by Yersinia YopJ prevents phosphorylation and activation, thus blocking the MAPK signaling pathway. As to expression, isoform 2 is only expressed in skeletal muscle. Isoform 1 is expressed in skeletal muscle, heart, and in lesser extent in liver or pancreas.

The protein resides in the nucleus. It is found in the cytoplasm. The protein localises to the cytoskeleton. The enzyme catalyses L-seryl-[protein] + ATP = O-phospho-L-seryl-[protein] + ADP + H(+). It carries out the reaction L-threonyl-[protein] + ATP = O-phospho-L-threonyl-[protein] + ADP + H(+). The catalysed reaction is L-tyrosyl-[protein] + ATP = O-phospho-L-tyrosyl-[protein] + ADP + H(+). With respect to regulation, activated by dual phosphorylation on Ser-207 and Thr-211 in response to a variety of cellular stresses, including UV radiation, osmotic shock, hypoxia, inflammatory cytokines, interferon gamma (IFNG), and less often by growth factors. MAP2K6/MKK6 is activated by the majority of M3Ks, such as MAP3K5/ASK1, MAP3K1/MEKK1, MAP3K2/MEKK2, MAP3K3/MEKK3, MAP3K4/MEKK4, MAP3K7/TAK1, MAP3K11/MLK3 and MAP3K17/TAOK2. Functionally, dual specificity protein kinase which acts as an essential component of the MAP kinase signal transduction pathway. With MAP3K3/MKK3, catalyzes the concomitant phosphorylation of a threonine and a tyrosine residue in the MAP kinases p38 MAPK11, MAPK12, MAPK13 and MAPK14 and plays an important role in the regulation of cellular responses to cytokines and all kinds of stresses. Especially, MAP2K3/MKK3 and MAP2K6/MKK6 are both essential for the activation of MAPK11 and MAPK13 induced by environmental stress, whereas MAP2K6/MKK6 is the major MAPK11 activator in response to TNF. MAP2K6/MKK6 also phosphorylates and activates PAK6. The p38 MAP kinase signal transduction pathway leads to direct activation of transcription factors. Nuclear targets of p38 MAP kinase include the transcription factors ATF2 and ELK1. Within the p38 MAPK signal transduction pathway, MAP3K6/MKK6 mediates phosphorylation of STAT4 through MAPK14 activation, and is therefore required for STAT4 activation and STAT4-regulated gene expression in response to IL-12 stimulation. The pathway is also crucial for IL-6-induced SOCS3 expression and down-regulation of IL-6-mediated gene induction; and for IFNG-dependent gene transcription. Has a role in osteoclast differentiation through NF-kappa-B transactivation by TNFSF11, and in endochondral ossification and since SOX9 is another likely downstream target of the p38 MAPK pathway. MAP2K6/MKK6 mediates apoptotic cell death in thymocytes. Acts also as a regulator for melanocytes dendricity, through the modulation of Rho family GTPases. This chain is Dual specificity mitogen-activated protein kinase kinase 6 (MAP2K6), found in Homo sapiens (Human).